The sequence spans 102 residues: Signal recognition particle 19 kDa protein (102 aa).

It belongs to the SRP19 family. As to quaternary structure, part of the signal recognition particle protein translocation system, which is composed of SRP and FtsY. Archaeal SRP consists of a 7S RNA molecule of 300 nucleotides and two protein subunits: SRP54 and SRP19.

It is found in the cytoplasm. Involved in targeting and insertion of nascent membrane proteins into the cytoplasmic membrane. Binds directly to 7S RNA and mediates binding of the 54 kDa subunit of the SRP. The chain is Signal recognition particle 19 kDa protein from Saccharolobus solfataricus (strain ATCC 35092 / DSM 1617 / JCM 11322 / P2) (Sulfolobus solfataricus).